Here is a 350-residue protein sequence, read N- to C-terminus: Phosphoribosylformylglycinamidine cyclo-ligase (350 aa).

The protein belongs to the AIR synthase family.

The protein localises to the cytoplasm. The enzyme catalyses 2-formamido-N(1)-(5-O-phospho-beta-D-ribosyl)acetamidine + ATP = 5-amino-1-(5-phospho-beta-D-ribosyl)imidazole + ADP + phosphate + H(+). Its pathway is purine metabolism; IMP biosynthesis via de novo pathway; 5-amino-1-(5-phospho-D-ribosyl)imidazole from N(2)-formyl-N(1)-(5-phospho-D-ribosyl)glycinamide: step 2/2. This is Phosphoribosylformylglycinamidine cyclo-ligase from Cupriavidus taiwanensis (strain DSM 17343 / BCRC 17206 / CCUG 44338 / CIP 107171 / LMG 19424 / R1) (Ralstonia taiwanensis (strain LMG 19424)).